A 305-amino-acid polypeptide reads, in one-letter code: Tyrosine recombinase XerC (305 aa).

A Core-binding (CB) domain is found at T4–E95. Residues L116 to T298 form the Tyr recombinase domain. Catalysis depends on residues R159, K182, H250, R253, and H276. Residue Y285 is the O-(3'-phospho-DNA)-tyrosine intermediate of the active site.

The protein belongs to the 'phage' integrase family. XerC subfamily. In terms of assembly, forms a cyclic heterotetrameric complex composed of two molecules of XerC and two molecules of XerD.

The protein resides in the cytoplasm. Its function is as follows. Site-specific tyrosine recombinase, which acts by catalyzing the cutting and rejoining of the recombining DNA molecules. The XerC-XerD complex is essential to convert dimers of the bacterial chromosome into monomers to permit their segregation at cell division. It also contributes to the segregational stability of plasmids. The sequence is that of Tyrosine recombinase XerC from Rickettsia canadensis (strain McKiel).